The chain runs to 529 residues: Bifunctional purine biosynthesis protein PurH (529 aa).

The 148-residue stretch at 1–148 (MQQRRPVRRA…KNHKDVAIVV (148 aa)) folds into the MGS-like domain. N6-acetyllysine is present on Lys287.

It belongs to the PurH family.

It carries out the reaction (6R)-10-formyltetrahydrofolate + 5-amino-1-(5-phospho-beta-D-ribosyl)imidazole-4-carboxamide = 5-formamido-1-(5-phospho-D-ribosyl)imidazole-4-carboxamide + (6S)-5,6,7,8-tetrahydrofolate. The catalysed reaction is IMP + H2O = 5-formamido-1-(5-phospho-D-ribosyl)imidazole-4-carboxamide. The protein operates within purine metabolism; IMP biosynthesis via de novo pathway; 5-formamido-1-(5-phospho-D-ribosyl)imidazole-4-carboxamide from 5-amino-1-(5-phospho-D-ribosyl)imidazole-4-carboxamide (10-formyl THF route): step 1/1. It participates in purine metabolism; IMP biosynthesis via de novo pathway; IMP from 5-formamido-1-(5-phospho-D-ribosyl)imidazole-4-carboxamide: step 1/1. The chain is Bifunctional purine biosynthesis protein PurH from Escherichia fergusonii (strain ATCC 35469 / DSM 13698 / CCUG 18766 / IAM 14443 / JCM 21226 / LMG 7866 / NBRC 102419 / NCTC 12128 / CDC 0568-73).